The sequence spans 125 residues: Large ribosomal subunit protein bL12 (125 aa).

It belongs to the bacterial ribosomal protein bL12 family. As to quaternary structure, homodimer. Part of the ribosomal stalk of the 50S ribosomal subunit. Forms a multimeric L10(L12)X complex, where L10 forms an elongated spine to which 2 to 4 L12 dimers bind in a sequential fashion. Binds GTP-bound translation factors.

Forms part of the ribosomal stalk which helps the ribosome interact with GTP-bound translation factors. Is thus essential for accurate translation. The polypeptide is Large ribosomal subunit protein bL12 (Campylobacter curvus (strain 525.92)).